Reading from the N-terminus, the 191-residue chain is Small ribosomal subunit protein eS7y (191 aa).

At methionine 1 the chain carries N-acetylmethionine. Positions 17–50 form a coiled coil; that stretch reads TEFEEQVTQALFDLENTNQELKSELKDLYINQAV.

It belongs to the eukaryotic ribosomal protein eS7 family.

This chain is Small ribosomal subunit protein eS7y (RPS7B), found in Arabidopsis thaliana (Mouse-ear cress).